The sequence spans 444 residues: Multidrug resistance protein MdtA (444 aa).

The signal sequence occupies residues 1-20 (MKSQSKRTSRLFVFVGVVVA). The span at 37 to 52 (NNTSGAQQSARGQDTS) shows a compositional bias: polar residues. 2 disordered regions span residues 37–60 (NNTSGAQQSARGQDTSHGGRRNTP) and 398–444 (TPRS…AEKS). The span at 409–419 (ASAEKAAAEAE) shows a compositional bias: low complexity. Residues 435–444 (ARSTTAAEKS) show a composition bias toward polar residues.

It belongs to the membrane fusion protein (MFP) (TC 8.A.1) family. Part of a tripartite efflux system composed of MdtA, MdtB and MdtC.

The protein resides in the cell inner membrane. In Yersinia pseudotuberculosis serotype O:3 (strain YPIII), this protein is Multidrug resistance protein MdtA.